Reading from the N-terminus, the 883-residue chain is Collagen, type I, alpha 1b (883 aa).

A disordered region spans residues 1-883; it reads QMSYVDHSKS…LGGSNDVELR (883 aa). A compositionally biased stretch (pro residues) spans 13-33; the sequence is PPQPGPMGPMGPRGPPGPPGS. Composition is skewed to low complexity over residues 34 to 57, 113 to 122, and 129 to 140; these read SGPQ…AMGS, VPGVMGARGR, and SGARGNDGNTGP. Gly residues-rich tracts occupy residues 147–161 and 185–194; these read TGGE…GNEG and GTDGGPGAKG. Low complexity-rich tracts occupy residues 195–205, 214–223, and 230–248; these read SPGAAGLAGAP, AQGAVGAPGP, and PGAS…PGPA. Positions 285 to 297 are enriched in gly residues; sequence GADGGAGGKGAPG. Composition is skewed to low complexity over residues 310–326 and 390–402; these read ATGE…PGSK and VGAP…AGPA. A compositionally biased stretch (gly residues) spans 415 to 424; the sequence is GAPGLGGPTG. A compositionally biased stretch (low complexity) spans 425–444; it reads ARGAPGPAGNDGAKGEPGAA. Composition is skewed to gly residues over residues 445–454 and 478–487; these read GAPGGLGAPG and GGKGGDGAPG. Positions 512–542 are enriched in low complexity; the sequence is AGPTGPRGETGPPGPAGFAGPPGADGQPGAK. Residues 564 to 573 show a composition bias toward gly residues; sequence GPKGGAGPPG. Composition is skewed to low complexity over residues 574–584, 717–726, and 742–756; these read ATGFPGPAGRV, APGAVGPSGK, and SGPA…PAGA. Residues 757-771 show a composition bias toward basic and acidic residues; the sequence is KGDRGEAGEAGDRGH. Residues 792-812 show a composition bias toward low complexity; the sequence is PAGASGPAGPRGPAGSNGAPG. Over residues 821-836 the composition is skewed to pro residues; it reads AGPPGPPGPAGPPGPP.

Belongs to the fibrillar collagen family.

The protein is Collagen, type I, alpha 1b of Epinephelus costae (Goldblotch grouper).